The sequence spans 363 residues: G-protein coupled receptor 6 (363 aa).

Residues 1 to 75 (MNASAAALNE…SGLLLSAVNP (75 aa)) are Extracellular-facing. Residues Asn2 and Asn9 are each glycosylated (N-linked (GlcNAc...) asparagine). Residues 29-48 (GAPDTGEWGPPAASAALGGG) are disordered. An N-linked (GlcNAc...) asparagine glycan is attached at Asn52. A helical membrane pass occupies residues 76-95 (WDVLLCVSGTVIAGENALVV). Over 96-107 (ALIASTPALRTP) the chain is Cytoplasmic. Residues 108–131 (MFVLVGSLATADLLAGCGLILHFV) form a helical membrane-spanning segment. Topologically, residues 132–143 (FQYVVPSETVSL) are extracellular. A helical transmembrane segment spans residues 144-165 (LMVGFLVASFAASVSSLLAITV). Residues 166-186 (DRYLSLYNALTYYSRRTLLGV) are Cytoplasmic-facing. The chain crosses the membrane as a helical span at residues 187-206 (HLLLAATWTVSLGLGLLPVL). Over 207–231 (GWNCLADRTSCSVVRPLTRSHVALL) the chain is Extracellular. Residues 232–250 (STSFFVVFGIMLHLYVRIC) form a helical membrane-spanning segment. Residues 251–278 (QVVWRHAHQIALQQHCLAPPHLAATRKG) are Cytoplasmic-facing. Residues 279-305 (VGTLAVVLGTFGASWLPFAIYCVVGSQ) form a helical membrane-spanning segment. Residues 306–310 (EDPAI) lie on the Extracellular side of the membrane. The helical transmembrane segment at 311–332 (YTYATLLPATYNSMINPIIYAF) threads the bilayer. Residues 333-363 (RNQEIQRALWLLFCGCFQSKVPFRSRSPSEV) are Cytoplasmic-facing. Cys346 is lipidated: S-palmitoyl cysteine. Phosphoserine occurs at positions 357, 359, and 361.

The protein belongs to the G-protein coupled receptor 1 family. In terms of tissue distribution, mainly expressed in the brain. Selectively expressed in striatopallidal neurons in the striatum.

The protein localises to the cell membrane. Functionally, orphan receptor with constitutive G(s) signaling activity that activate cyclic AMP. Promotes neurite outgrowth and blocks myelin inhibition in neurons. The polypeptide is G-protein coupled receptor 6 (Gpr6) (Mus musculus (Mouse)).